The following is a 384-amino-acid chain: 1-deoxy-D-xylulose 5-phosphate reductoisomerase (384 aa).

7 residues coordinate NADPH: Thr10, Gly11, Ser12, Ile13, Gly36, Asn38, and Asn122. Lys123 lines the 1-deoxy-D-xylulose 5-phosphate pocket. Glu124 contacts NADPH. Asp148 serves as a coordination point for Mn(2+). 1-deoxy-D-xylulose 5-phosphate-binding residues include Ser149, Glu150, Ser174, and His197. Residue Glu150 coordinates Mn(2+). An NADPH-binding site is contributed by Gly203. Ser210, Asn215, Lys216, and Glu219 together coordinate 1-deoxy-D-xylulose 5-phosphate. Glu219 is a Mn(2+) binding site.

The protein belongs to the DXR family. Mg(2+) is required as a cofactor. It depends on Mn(2+) as a cofactor.

It catalyses the reaction 2-C-methyl-D-erythritol 4-phosphate + NADP(+) = 1-deoxy-D-xylulose 5-phosphate + NADPH + H(+). Its pathway is isoprenoid biosynthesis; isopentenyl diphosphate biosynthesis via DXP pathway; isopentenyl diphosphate from 1-deoxy-D-xylulose 5-phosphate: step 1/6. In terms of biological role, catalyzes the NADPH-dependent rearrangement and reduction of 1-deoxy-D-xylulose-5-phosphate (DXP) to 2-C-methyl-D-erythritol 4-phosphate (MEP). The chain is 1-deoxy-D-xylulose 5-phosphate reductoisomerase from Geobacter metallireducens (strain ATCC 53774 / DSM 7210 / GS-15).